We begin with the raw amino-acid sequence, 1008 residues long: Chitin synthase C (1008 aa).

The interval 1–160 is disordered; that stretch reads MIYEMMVMKR…GGRTIDPNNR (160 aa). The span at 10–19 shows a compositional bias: low complexity; sequence RSANSRAQNN. The segment covering 34–45 has biased composition (polar residues); that stretch reads ESPSRPVSSLGN. An N-linked (GlcNAc...) asparagine glycan is attached at Asn-312. A run of 5 helical transmembrane segments spans residues 642 to 662, 682 to 702, 717 to 737, 755 to 775, and 787 to 807; these read FMQL…FYFI, IFVI…IISM, IIVY…LVVI, LFVN…YASF, and SAAY…YAFC. Asn-833 carries an N-linked (GlcNAc...) asparagine glycan. 2 helical membrane passes run 887 to 907 and 910 to 930; these read MVSI…EVYG and AGGT…LALI. Asn-961 carries an N-linked (GlcNAc...) asparagine glycan.

The protein belongs to the chitin synthase family. Class II subfamily.

The protein resides in the cell membrane. The catalysed reaction is [(1-&gt;4)-N-acetyl-beta-D-glucosaminyl](n) + UDP-N-acetyl-alpha-D-glucosamine = [(1-&gt;4)-N-acetyl-beta-D-glucosaminyl](n+1) + UDP + H(+). Polymerizes chitin, a structural polymer of the cell wall and septum, by transferring the sugar moiety of UDP-GlcNAc to the non-reducing end of the growing chitin polymer. Involved in cell wall integrity and mycelial morphology. Plays an important role in septal growth or maintenance. Acts as a positive regulator of conidiation, cellular responses to oxidative stresses, and the production of malic acid. Negatively regulates the citric acid production. The chain is Chitin synthase C from Aspergillus niger (strain ATCC MYA-4892 / CBS 513.88 / FGSC A1513).